Consider the following 180-residue polypeptide: Inorganic pyrophosphatase (180 aa).

K30, R44, and Y56 together coordinate substrate. Mg(2+) contacts are provided by D66, D71, and D103. Residue Y142 coordinates substrate.

This sequence belongs to the PPase family. Homohexamer. Mg(2+) serves as cofactor.

The protein resides in the cytoplasm. It catalyses the reaction diphosphate + H2O = 2 phosphate + H(+). Functionally, catalyzes the hydrolysis of inorganic pyrophosphate (PPi) forming two phosphate ions. In Buchnera aphidicola subsp. Schizaphis graminum (strain Sg), this protein is Inorganic pyrophosphatase.